We begin with the raw amino-acid sequence, 102 residues long: MASTKLFFSVITVMMLIAMASEMVNGSAFTVWSGPGCNNRAERYSKCGCSAIHQKGGYDFSYTGQTAALYNQAGCSGVAHTRFGSSARACNPFGWKSIFIQC.

Positions 1–26 are cleaved as a signal peptide; it reads MASTKLFFSVITVMMLIAMASEMVNG. 3 disulfide bridges follow: cysteine 37–cysteine 90, cysteine 47–cysteine 102, and cysteine 49–cysteine 75.

The protein localises to the secreted. Functionally, antimicrobial peptide which inhibits the growth of a variety of fungi, oomycetes, Gram-positive bacterial phytopatogenes and S.cerevisiae in vitro. No activity against E.coli. This chain is Antimicrobial peptide 1, found in Macadamia integrifolia (Macadamia nut).